A 582-amino-acid polypeptide reads, in one-letter code: Protein NUCLEAR FUSION DEFECTIVE 4 (582 aa).

The segment at 1–20 (MRPRIRDVSDKLRPNRASFD) is disordered. A run of 8 helical transmembrane segments spans residues 46–66 (VLVA…FSAY), 100–120 (IALG…MGFV), 132–152 (IITL…LSIC), 172–192 (LALS…SLAF), 202–222 (LYLL…LYPV), 243–263 (VFTI…LSSS), 270–290 (LNFI…LLVY), and 358–378 (LEFW…LVYS). A glycan (N-linked (GlcNAc...) asparagine) is linked at asparagine 391. A run of 5 helical transmembrane segments spans residues 395-412 (LVTI…LSAA), 425-445 (TGWF…LAVS), 458-478 (LIGL…SDLF), 489-509 (ILIT…ASIY), and 536-556 (TFVF…SLYI).

Its subcellular location is the membrane. Required for karyogamy during female gametophyte development, when the two polar nuclei fuse to form the diploid central cell nucleus. This Arabidopsis thaliana (Mouse-ear cress) protein is Protein NUCLEAR FUSION DEFECTIVE 4.